Reading from the N-terminus, the 1193-residue chain is K(+) efflux antiporter 1, chloroplastic (1193 aa).

The N-terminal 49 residues, 1-49 (MEYASTFQRPILFHGGDGASYCFPNRLISPKGISITSGDSKVHSCFRLR), are a transit peptide targeting the chloroplast. The Stromal segment spans residues 50–585 (RNVAQSGTLN…MIPHQEVNEE (536 aa)). The interval 103-135 (SLGNADSNDHRIGESSESSDETEATDLKDARVE) is disordered. Residues 131-355 (DARVENDTDS…RAEKSLSISQ (225 aa)) are a coiled coil. Residue lysine 168 is modified to N6-acetyllysine; by NSI. The span at 351-364 (LSISQTPEETQGQL) shows a compositional bias: polar residues. Disordered regions lie at residues 351 to 372 (LSISQTPEETQGQLSDEETSQE) and 421 to 474 (QPYE…NSPK). Residues 439–465 (KVVEADSEKPKINVQTKKQETQKDLPK) are compositionally biased toward basic and acidic residues. A helical transmembrane segment spans residues 586–606 (EASLFDFLWLLLASVIFVPLF). The Chloroplast intermembrane segment spans residues 607-612 (QKIPGG). A helical transmembrane segment spans residues 613-633 (SPVLGYLAAGILIGPYGLSII). Topologically, residues 634-640 (RNVHGTR) are stromal. A helical transmembrane segment spans residues 641 to 661 (AIAEFGVVFLLFNIGLELSVE). At 662 to 668 (RLSSMKK) the chain is on the chloroplast intermembrane side. Residues 669-689 (YVFGLGSAQVLVTAAVVGLLA) form a helical membrane-spanning segment. The Stromal segment spans residues 690–698 (HYVAGQAGP). The helical transmembrane segment at 699-719 (AAIVIGNGLALSSTAVVLQVL) threads the bilayer. At 720 to 733 (QERGESTSRHGRAS) the chain is on the chloroplast intermembrane side. Residues 734 to 754 (FSVLLFQDLAVVVLLILIPLI) form a helical membrane-spanning segment. The Stromal segment spans residues 755-766 (SPNSSKGGIGFQ). The chain crosses the membrane as a helical span at residues 767-787 (AIAEALGLAAVKAAVAITAII). Topologically, residues 788-827 (AGGRLLLRPIYKQIAENRNAEIFSANTLLVILGTSLLTAR) are chloroplast intermembrane. The chain crosses the membrane as a helical span at residues 828–848 (AGLSMALGAFLAGLLLAETEF). At 849–860 (SLQVESDIAPYR) the chain is on the stromal side. A helical transmembrane segment spans residues 861 to 881 (GLLLGLFFMTVGMSIDPKLLL). Residues 882-883 (SN) lie on the Chloroplast intermembrane side of the membrane. The chain crosses the membrane as a helical span at residues 884–904 (FPVIVGTLGLLIVGKTMLVVI). Over 905 to 912 (MGKLFGIS) the chain is Stromal. Residues 913–933 (IISAIRVGLLLAPGGEFAFVA) traverse the membrane as a helical segment. Over 934–948 (FGEAVNQGIMSPQLS) the chain is Chloroplast intermembrane. The chain crosses the membrane as a helical span at residues 949-969 (SLLFLVVGISMAITPWLAAGG). At 970-1193 (QLIASRFELH…QIIEGGTVVI (224 aa)) the chain is on the stromal side. Residues 995–1112 (QGHIIICGFG…EKAGATAVVP (118 aa)) form the RCK N-terminal domain. The tract at residues 1165–1184 (GYSRTSKPKPQPSDASGDNQ) is disordered.

It belongs to the monovalent cation:proton antiporter 2 (CPA2) transporter (TC 2.A.37) family. KEA (TC 2.A.37.1) subfamily. In terms of processing, acetylated at Lys-168 by the stromal acetyltransferase enzyme NSI. In terms of tissue distribution, expressed in shoots and roots. Mainly localized to leaf veins, hypocotyls, mesophylls and guard cells. Accumulates at high levels in small and dividing plastids (at protein level).

Its subcellular location is the plastid. It localises to the chloroplast inner membrane. It catalyses the reaction K(+)(in) + H(+)(out) = K(+)(out) + H(+)(in). Repressed by sodium ions Na(+). Its function is as follows. Electroneutral K(+)/H(+) efflux antiporter involved in chloroplastic K(+) homeostasis and osmotic adjustment, especially during plastid division and thylakoid membrane formation. Collaboratively with KEA2, adjusts alkaline stromal pH upon light to dark transitions in plastids. Together with KEA2, critical for chloroplast development, including chloroplast RNA-metabolism (e.g. rRNA maturation, polysome loading and RNA-protein interactions) and plastid gene expression (PGE), ion homeostasis, and photosynthesis. Contributes, during early seedling development, to the regulation of photosynthesis and abscisic acid- (ABA-) mediated primary root growth in a sucrose-dependent manner. Involved in the regulation of reactive oxygen and nitrogen species (ROS and RNS) metabolism. Required in roots for rapid hyperosmotic-induced Ca(2+) responses and for osmo-sensory potentiation in hyperosmotic conditions. May counteract resilience to drought and salt stress, involving photorespiratory pathway and stomata closure. The protein is K(+) efflux antiporter 1, chloroplastic of Arabidopsis thaliana (Mouse-ear cress).